Consider the following 280-residue polypeptide: 3-methyl-2-oxobutanoate hydroxymethyltransferase (280 aa).

Positions 49 and 88 each coordinate Mg(2+). 3-methyl-2-oxobutanoate-binding positions include 49 to 50 (DS), Asp88, and Lys118. Glu120 lines the Mg(2+) pocket. Glu186 (proton acceptor) is an active-site residue.

The protein belongs to the PanB family. As to quaternary structure, homodecamer; pentamer of dimers. The cofactor is Mg(2+).

It is found in the cytoplasm. The enzyme catalyses 3-methyl-2-oxobutanoate + (6R)-5,10-methylene-5,6,7,8-tetrahydrofolate + H2O = 2-dehydropantoate + (6S)-5,6,7,8-tetrahydrofolate. It participates in cofactor biosynthesis; (R)-pantothenate biosynthesis; (R)-pantoate from 3-methyl-2-oxobutanoate: step 1/2. Its function is as follows. Catalyzes the reversible reaction in which hydroxymethyl group from 5,10-methylenetetrahydrofolate is transferred onto alpha-ketoisovalerate to form ketopantoate. The sequence is that of 3-methyl-2-oxobutanoate hydroxymethyltransferase from Ruegeria sp. (strain TM1040) (Silicibacter sp.).